The following is a 278-amino-acid chain: Probable ribosomal RNA small subunit methyltransferase A (278 aa).

The S-adenosyl-L-methionine site is built by His-25, Met-27, Gly-52, Glu-73, Asp-98, and Asn-114.

Belongs to the class I-like SAM-binding methyltransferase superfamily. rRNA adenine N(6)-methyltransferase family. RsmA subfamily.

It localises to the cytoplasm. Functionally, specifically dimethylates two adjacent adenosines in the loop of a conserved hairpin near the 3'-end of 16S rRNA in the 30S particle. May play a critical role in biogenesis of 30S subunits. The sequence is that of Probable ribosomal RNA small subunit methyltransferase A from Methanopyrus kandleri (strain AV19 / DSM 6324 / JCM 9639 / NBRC 100938).